A 1538-amino-acid chain; its full sequence is Lysophospholipase nte1 (1538 aa).

The Cytoplasmic portion of the chain corresponds to 1 to 74 (MATDGGPLAA…PPPTPSTMAG (74 aa)). Residues 75-95 (WFGWVFSFFFQVIPSVLYWVI) traverse the membrane as a helical segment. At 96 to 117 (TFATITLPTWLFTLFSMSLTFT) the chain is on the lumenal side. A helical membrane pass occupies residues 118–138 (MNFTTLLLIALAIVSTISWFI). The Cytoplasmic segment spans residues 139–1538 (RYRFLNMYSR…RTLAPRRASI (1400 aa)). Disordered stretches follow at residues 242 to 264 (KPNV…DHRV), 302 to 393 (EGSS…KSVH), and 529 to 559 (AAQS…GDLL). Residues 302–314 (EGSSSSASSVGPS) are compositionally biased toward low complexity. Basic and acidic residues predominate over residues 329 to 345 (GLEDSPRSNFVRDHGDS). A nucleoside 3',5'-cyclic phosphate contacts are provided by residues 692-811 (GGTS…QGYV) and 856-976 (RLTS…IAQR). The region spanning 1235-1399 (LVLGGGGARG…IDNLTVTHMK (165 aa)) is the PNPLA domain. Positions 1239–1244 (GGGARG) match the GXGXXG motif. Residues 1266–1270 (GTSIG) carry the GXSXG motif. The active-site Nucleophile is S1268. D1386 serves as the catalytic Proton acceptor. Positions 1386-1388 (DGG) match the DGA/G motif. Residues 1517 to 1538 (LPEETEEKKKLQRTLAPRRASI) are disordered.

This sequence belongs to the NTE family.

The protein resides in the endoplasmic reticulum membrane. The enzyme catalyses a 1-acyl-sn-glycero-3-phosphocholine + H2O = sn-glycerol 3-phosphocholine + a fatty acid + H(+). With respect to regulation, inhibited by organophosphorus esters. In terms of biological role, intracellular phospholipase B that catalyzes the double deacylation of phosphatidylcholine (PC) to glycerophosphocholine (GroPCho). Plays an important role in membrane lipid homeostasis. Responsible for the rapid PC turnover in response to inositol, elevated temperatures, or when choline is present in the growth medium. This is Lysophospholipase nte1 (nte1) from Aspergillus oryzae (strain ATCC 42149 / RIB 40) (Yellow koji mold).